The sequence spans 509 residues: MTSLWLPATGKVYLPPSTPVARVQSTDEYIQRTDIYYHANSDRLLTVGHPYFDVRDTADNSKILVPKVSGNQYRAFRLLLPDPNRFALVDMNIYNPEKERLVWACRGLEIGRGQPLGVGTTGHPLFNKVKDTENANNYIVTSKDDRQDTSFDPKQVQMFIIGCTPCMGEYWDAAKPCDADAGQGKCPPLELINSVIQDGDMIDIGFGNINNKTLSVNRSDVSLDIVNDICKYPDFLKMANDIYGDACFFYARREQCYARHFFVRGGNVGDAIPNTAVGQDNNYILPAASQQAQNTLGSSIYFPTVSGSLVSTDAQLFNRPFWLQRAQGHNNGICWENQLFITVADNTRNTNFTISVSTDGQTPTEYDSTKVREFLRHVEEYEISIILQLCKVPLEPEVLAQINAMNSSILENWQLGFVPTPDNPIHDTYRYLTSQATRCPDKQPAPERKDPYEQYNFWTVDLTEKLSLDLDQYSLGRKFLFQAGLQRASRVSKSSAARASTRGIKRKRR.

It belongs to the papillomaviridae L1 protein family. As to quaternary structure, self-assembles into homopentamers. The capsid has an icosahedral symmetry and consists of 72 capsomers, with each capsomer being a pentamer of L1. Interacts with the minor capsid protein L2; this interaction is necessary for viral genome encapsidation. Interacts with protein E2; this interaction enhances E2-dependent replication and transcription activation.

The protein resides in the virion. Its subcellular location is the host nucleus. Forms an icosahedral capsid with a T=7 symmetry and a 50 nm diameter. The capsid is composed of 72 pentamers linked to each other by disulfide bonds and associated with L2 proteins. Binds to heparan sulfate proteoglycans on cell surface of basal layer keratinocytes to provide initial virion attachment. This binding mediates a conformational change in the virus capsid that facilitates efficient infection. The virion enters the host cell via endocytosis. During virus trafficking, L1 protein dissociates from the viral DNA and the genomic DNA is released to the host nucleus. The virion assembly takes place within the cell nucleus. Encapsulates the genomic DNA together with protein L2. This Human papillomavirus type 49 protein is Major capsid protein L1.